The primary structure comprises 365 residues: IgG receptor FcRn large subunit p51 (365 aa).

Positions methionine 1–glycine 21 are cleaved as a signal peptide. The interval serine 22–threonine 110 is alpha-1. Residues serine 22 to serine 297 lie on the Extracellular side of the membrane. N-linked (GlcNAc...) asparagine glycosylation is found at asparagine 108, asparagine 125, asparagine 149, and asparagine 246. The alpha-2 stretch occupies residues tyrosine 111–lysine 200. Cystine bridges form between cysteine 119-cysteine 182 and cysteine 221-cysteine 275. The alpha-3 stretch occupies residues glutamate 201–leucine 290. The region spanning proline 202–aspartate 289 is the Ig-like C1-type domain. The segment at aspartate 291–serine 297 is connecting peptide. A helical membrane pass occupies residues valine 298 to tryptophan 321. Topologically, residues glycine 322–serine 365 are cytoplasmic. Serine 334 is modified (phosphoserine). A disordered region spans residues leucine 343 to serine 365.

Belongs to the immunoglobulin superfamily. In terms of assembly, fcRn complex consists of two subunits: p51, and p14 which is equivalent to beta-2-microglobulin. It forms an MHC class I-like heterodimer. Interacts with albumin/ALB; this interaction regulates ALB homeostasis. As to expression, intestinal epithelium of suckling rodents. Expressed in neonatal intestine and fetal yolk sac.

The protein localises to the cell membrane. The protein resides in the endosome membrane. Functionally, cell surface receptor that transfers passive humoral immunity from the mother to the newborn. Binds to the Fc region of monomeric immunoglobulin gamma and mediates its selective uptake from milk. IgG in the milk is bound at the apical surface of the intestinal epithelium. The resultant FcRn-IgG complexes are transcytosed across the intestinal epithelium and IgG is released from FcRn into blood or tissue fluids. Throughout life, contributes to effective humoral immunity by recycling IgG and extending its half-life in the circulation. Mechanistically, monomeric IgG binding to FcRn in acidic endosomes of endothelial and hematopoietic cells recycles IgG to the cell surface where it is released into the circulation. In addition of IgG, regulates homeostasis of the other most abundant circulating protein albumin/ALB. This chain is IgG receptor FcRn large subunit p51 (Fcgrt), found in Mus musculus (Mouse).